The primary structure comprises 201 residues: MNPEYDYLFKLLLIGDSGVGKSCLLLRFADDTYTESYISTIGVDFKIRTIELDGKTIKLQIWDTAGQERFRTITSSYYRGAHGIIVVYDVTDQESFNNVKQWLHEIDRYACENVNKLLVGNKSDLTAKRVVSTDAAKEFAESLGIEFLETSAKNAANVEKAFMMMAAQIKKRMANAPVAPKAGVKLTPGQQVPSNGGSKCC.

Residues 15–23, 33–40, 63–67, 121–124, and 151–153 each bind GTP; these read GDSGVGKSC, YTESYIST, DTAGQ, NKSD, and SAK. The Effector region signature appears at 37–45; the sequence is YISTIGVDF. 2 S-geranylgeranyl cysteine lipidation sites follow: Cys200 and Cys201.

It belongs to the small GTPase superfamily. Rab family.

The protein resides in the endoplasmic reticulum membrane. It is found in the golgi apparatus membrane. Its subcellular location is the cytoplasm. It localises to the preautophagosomal structure membrane. Rab activation is generally mediated by a guanine exchange factor (GEF), while inactivation through hydrolysis of bound GTP is catalyzed by a GTPase activating protein (GAP). The small GTPases Rab are key regulators of intracellular membrane trafficking, from the formation of transport vesicles to their fusion with membranes. Rabs cycle between an inactive GDP-bound form and an active GTP-bound form that is able to recruit to membranes different set of downstream effectors directly responsible for vesicle formation, movement, tethering and fusion. YPT1 regulates the trafficking of secretory vesicles from the endoplasmic reticulum (ER) to the Golgi. Plays a role in the initial events of the autophagic vacuole development which take place at specialized regions of the endoplasmic reticulum. Also involved in the recycling of membrane proteins. The polypeptide is Ras-like GTP-binding protein YPT1 (YPT1) (Phytophthora infestans (Potato late blight agent)).